Reading from the N-terminus, the 156-residue chain is Cellulose synthase operon protein D (156 aa).

It functions in the pathway glycan metabolism; bacterial cellulose biosynthesis. May have a major role in the perfection of crystallization, involved either in the pore structure itself or in the organization of the pores within the linear array of terminal synthesizing complexes (TCs). This is Cellulose synthase operon protein D (bcsDI) from Komagataeibacter xylinus (Gluconacetobacter xylinus).